Here is a 265-residue protein sequence, read N- to C-terminus: Small ribosomal subunit protein uS2 (265 aa).

The disordered stretch occupies residues 231–265 (VEEEYEDYEGAEDDYEYDETEYTDSVIPDDEEEAE).

It belongs to the universal ribosomal protein uS2 family.

This Trichormus variabilis (strain ATCC 29413 / PCC 7937) (Anabaena variabilis) protein is Small ribosomal subunit protein uS2.